The primary structure comprises 128 residues: Saitohin (128 aa).

The disordered stretch occupies residues 77-128 (SYSSEESSRNGAEQGRQLSIEGPFQGQNCPSHPAAALPLPMRGESQATSCQV).

In terms of assembly, interacts with PRDX6.

It localises to the cytoplasm. Its subcellular location is the nucleus. The chain is Saitohin (STH) from Gorilla gorilla gorilla (Western lowland gorilla).